The primary structure comprises 165 residues: Large ribosomal subunit protein uL11A (165 aa).

Arg67 is modified (N5-methylarginine).

The protein belongs to the universal ribosomal protein uL11 family. In terms of assembly, component of the large ribosomal subunit (LSU). Mature yeast ribosomes consist of a small (40S) and a large (60S) subunit. The 40S small subunit contains 1 molecule of ribosomal RNA (18S rRNA) and at least 33 different proteins. The large 60S subunit contains 3 rRNA molecules (25S, 5.8S and 5S rRNA) and at least 46 different proteins.

Its subcellular location is the cytoplasm. The protein localises to the nucleus. The protein resides in the nucleolus. In terms of biological role, this protein binds directly to 26S ribosomal RNA. Functionally, component of the ribosome, a large ribonucleoprotein complex responsible for the synthesis of proteins in the cell. The small ribosomal subunit (SSU) binds messenger RNAs (mRNAs) and translates the encoded message by selecting cognate aminoacyl-transfer RNA (tRNA) molecules. The large subunit (LSU) contains the ribosomal catalytic site termed the peptidyl transferase center (PTC), which catalyzes the formation of peptide bonds, thereby polymerizing the amino acids delivered by tRNAs into a polypeptide chain. The nascent polypeptides leave the ribosome through a tunnel in the LSU and interact with protein factors that function in enzymatic processing, targeting, and the membrane insertion of nascent chains at the exit of the ribosomal tunnel. In Schizosaccharomyces pombe (strain 972 / ATCC 24843) (Fission yeast), this protein is Large ribosomal subunit protein uL11A (rpl1201).